Reading from the N-terminus, the 82-residue chain is ATP synthase subunit c (82 aa).

2 helical membrane passes run 6–26 and 49–69; these read LGLT…GCGI and IMVT…YALV.

This sequence belongs to the ATPase C chain family. F-type ATPases have 2 components, F(1) - the catalytic core - and F(0) - the membrane proton channel. F(1) has five subunits: alpha(3), beta(3), gamma(1), delta(1), epsilon(1). F(0) has three main subunits: a(1), b(2) and c(10-14). The alpha and beta chains form an alternating ring which encloses part of the gamma chain. F(1) is attached to F(0) by a central stalk formed by the gamma and epsilon chains, while a peripheral stalk is formed by the delta and b chains.

The protein resides in the cell inner membrane. Functionally, f(1)F(0) ATP synthase produces ATP from ADP in the presence of a proton or sodium gradient. F-type ATPases consist of two structural domains, F(1) containing the extramembraneous catalytic core and F(0) containing the membrane proton channel, linked together by a central stalk and a peripheral stalk. During catalysis, ATP synthesis in the catalytic domain of F(1) is coupled via a rotary mechanism of the central stalk subunits to proton translocation. Key component of the F(0) channel; it plays a direct role in translocation across the membrane. A homomeric c-ring of between 10-14 subunits forms the central stalk rotor element with the F(1) delta and epsilon subunits. This chain is ATP synthase subunit c, found in Nitratidesulfovibrio vulgaris (strain ATCC 29579 / DSM 644 / CCUG 34227 / NCIMB 8303 / VKM B-1760 / Hildenborough) (Desulfovibrio vulgaris).